We begin with the raw amino-acid sequence, 391 residues long: Processive diacylglycerol beta-glucosyltransferase (391 aa).

It belongs to the glycosyltransferase 28 family. UgtP subfamily.

The protein localises to the cell membrane. It carries out the reaction a 1,2-diacyl-3-O-(beta-D-glucopyranosyl)-sn-glycerol + UDP-alpha-D-glucose = a 1,2-diacyl-3-O-(beta-D-Glc-(1-&gt;6)-beta-D-Glc)-sn-glycerol + UDP + H(+). The enzyme catalyses a 1,2-diacyl-sn-glycerol + UDP-alpha-D-glucose = a 1,2-diacyl-3-O-(beta-D-glucopyranosyl)-sn-glycerol + UDP + H(+). Its pathway is glycolipid metabolism; diglucosyl-diacylglycerol biosynthesis. Processive glucosyltransferase involved in the biosynthesis of both the bilayer- and non-bilayer-forming membrane glucolipids. Is able to successively transfer two glucosyl residues to diacylglycerol (DAG), thereby catalyzing the formation of beta-monoglucosyl-DAG (3-O-(beta-D-glucopyranosyl)-1,2-diacyl-sn-glycerol) and beta-diglucosyl-DAG (3-O-(beta-D-glucopyranosyl-beta-(1-&gt;6)-D-glucopyranosyl)-1,2-diacyl-sn-glycerol). Beta-diglucosyl-DAG is the predominant glycolipid found in Bacillales and is also used as a membrane anchor for lipoteichoic acid (LTA). This chain is Processive diacylglycerol beta-glucosyltransferase, found in Staphylococcus epidermidis (strain ATCC 12228 / FDA PCI 1200).